We begin with the raw amino-acid sequence, 491 residues long: uncharacterized protein (491 aa).

267–274 (GIQGTGKS) contacts ATP.

The protein belongs to the AAA ATPase family. Highly divergent.

It is found in the plastid. Its subcellular location is the chloroplast. This is an uncharacterized protein from Gracilaria tenuistipitata var. liui (Red alga).